Here is a 721-residue protein sequence, read N- to C-terminus: Penicillin-binding protein activator LpoA (721 aa).

The signal sequence occupies residues Met-1–Gly-26. A lipid anchor (N-palmitoyl cysteine) is attached at Cys-27. The S-diacylglycerol cysteine moiety is linked to residue Cys-27. The segment covering Thr-316–Met-330 has biased composition (polar residues). Positions Thr-316–Ala-393 are disordered. Residues Gln-331–Ala-393 are compositionally biased toward low complexity.

It belongs to the LpoA family. In terms of assembly, interacts with PBP1a.

It is found in the cell outer membrane. Its function is as follows. Regulator of peptidoglycan synthesis that is essential for the function of penicillin-binding protein 1A (PBP1a). The chain is Penicillin-binding protein activator LpoA from Enterobacter sp. (strain 638).